Here is a 223-residue protein sequence, read N- to C-terminus: Phosphoribosylformylglycinamidine synthase subunit PurQ (223 aa).

Residues 3–223 form the Glutamine amidotransferase type-1 domain; it reads SAVVQLPGLN…FASALDVIAA (221 aa). C86 serves as the catalytic Nucleophile. Residues H196 and E198 contribute to the active site.

In terms of assembly, part of the FGAM synthase complex composed of 1 PurL, 1 PurQ and 2 PurS subunits.

It localises to the cytoplasm. The catalysed reaction is N(2)-formyl-N(1)-(5-phospho-beta-D-ribosyl)glycinamide + L-glutamine + ATP + H2O = 2-formamido-N(1)-(5-O-phospho-beta-D-ribosyl)acetamidine + L-glutamate + ADP + phosphate + H(+). It catalyses the reaction L-glutamine + H2O = L-glutamate + NH4(+). It functions in the pathway purine metabolism; IMP biosynthesis via de novo pathway; 5-amino-1-(5-phospho-D-ribosyl)imidazole from N(2)-formyl-N(1)-(5-phospho-D-ribosyl)glycinamide: step 1/2. Its function is as follows. Part of the phosphoribosylformylglycinamidine synthase complex involved in the purines biosynthetic pathway. Catalyzes the ATP-dependent conversion of formylglycinamide ribonucleotide (FGAR) and glutamine to yield formylglycinamidine ribonucleotide (FGAM) and glutamate. The FGAM synthase complex is composed of three subunits. PurQ produces an ammonia molecule by converting glutamine to glutamate. PurL transfers the ammonia molecule to FGAR to form FGAM in an ATP-dependent manner. PurS interacts with PurQ and PurL and is thought to assist in the transfer of the ammonia molecule from PurQ to PurL. The polypeptide is Phosphoribosylformylglycinamidine synthase subunit PurQ (Rhizobium meliloti (strain 1021) (Ensifer meliloti)).